We begin with the raw amino-acid sequence, 254 residues long: Thiazole synthase (254 aa).

K95 serves as the catalytic Schiff-base intermediate with DXP. 1-deoxy-D-xylulose 5-phosphate contacts are provided by residues G156, 182–183 (AG), and 204–205 (NT).

It belongs to the ThiG family. As to quaternary structure, homotetramer. Forms heterodimers with either ThiH or ThiS.

The protein resides in the cytoplasm. The catalysed reaction is [ThiS sulfur-carrier protein]-C-terminal-Gly-aminoethanethioate + 2-iminoacetate + 1-deoxy-D-xylulose 5-phosphate = [ThiS sulfur-carrier protein]-C-terminal Gly-Gly + 2-[(2R,5Z)-2-carboxy-4-methylthiazol-5(2H)-ylidene]ethyl phosphate + 2 H2O + H(+). It participates in cofactor biosynthesis; thiamine diphosphate biosynthesis. Catalyzes the rearrangement of 1-deoxy-D-xylulose 5-phosphate (DXP) to produce the thiazole phosphate moiety of thiamine. Sulfur is provided by the thiocarboxylate moiety of the carrier protein ThiS. In vitro, sulfur can be provided by H(2)S. The chain is Thiazole synthase from Shewanella baltica (strain OS223).